The following is a 306-amino-acid chain: tRNA-cytidine(32) 2-sulfurtransferase (306 aa).

Residues serine 49–serine 54 carry the PP-loop motif motif. Cysteine 124, cysteine 127, and cysteine 215 together coordinate [4Fe-4S] cluster.

This sequence belongs to the TtcA family. Homodimer. It depends on Mg(2+) as a cofactor. The cofactor is [4Fe-4S] cluster.

It is found in the cytoplasm. It carries out the reaction cytidine(32) in tRNA + S-sulfanyl-L-cysteinyl-[cysteine desulfurase] + AH2 + ATP = 2-thiocytidine(32) in tRNA + L-cysteinyl-[cysteine desulfurase] + A + AMP + diphosphate + H(+). Its pathway is tRNA modification. In terms of biological role, catalyzes the ATP-dependent 2-thiolation of cytidine in position 32 of tRNA, to form 2-thiocytidine (s(2)C32). The sulfur atoms are provided by the cysteine/cysteine desulfurase (IscS) system. This chain is tRNA-cytidine(32) 2-sulfurtransferase, found in Azoarcus sp. (strain BH72).